Here is a 312-residue protein sequence, read N- to C-terminus: Methionyl-tRNA formyltransferase (312 aa).

107-110 (SLLP) provides a ligand contact to (6S)-5,6,7,8-tetrahydrofolate.

It belongs to the Fmt family.

The enzyme catalyses L-methionyl-tRNA(fMet) + (6R)-10-formyltetrahydrofolate = N-formyl-L-methionyl-tRNA(fMet) + (6S)-5,6,7,8-tetrahydrofolate + H(+). In terms of biological role, attaches a formyl group to the free amino group of methionyl-tRNA(fMet). The formyl group appears to play a dual role in the initiator identity of N-formylmethionyl-tRNA by promoting its recognition by IF2 and preventing the misappropriation of this tRNA by the elongation apparatus. This is Methionyl-tRNA formyltransferase from Endomicrobium trichonymphae.